A 517-amino-acid polypeptide reads, in one-letter code: MAGPVPTLGLLAALVVCGSWGLNEEQRLIQHLFEEKGYNKELRPVARKEDIVDVALSLTLSNLISLKEVEETLTTNVWIDHAWIDSRLQWNANEFGNITVLRLPSDMVWLPEIVLENNNDGSFQISYACNVLVSDSGHVTWLPPAIFRSSCPISVTYFPFDWQNCSLKFSSLKYTAKEIRLSLKQEEEDNRSYPIEWIIIDPEGFTENGEWEIVHRAAKVNVDPSVPMDSTNHQDVTFYLIIRRKPLFYIINILVPCVLISFMINLVFYLPGDCGEKTSVAISVLLAQSVFLLLISKRLPATSMAIPLVGKFLLFGMVLVTMVVVICVIVLNIHFRTPSTHVLSEGVKKFFLETLPKLLHMSRPEEEDPGPRALIRRTSSLGYISKAEEYFSLKSRSDLMFEKQSERHGLARRLTTARKPPASSEQVQQELFNEMKPAVDGANFIVNHMRDQNSYNEEKDNWNQVARTVDRLCLFVVTPVMVVGTAWIFLQGVYNQPPPQPFPGDPFSYDEQDRRFI.

The N-terminal stretch at 1-21 (MAGPVPTLGLLAALVVCGSWG) is a signal peptide. At 22–245 (LNEEQRLIQH…VTFYLIIRRK (224 aa)) the chain is on the extracellular side. N-linked (GlcNAc...) asparagine glycans are attached at residues Asn-97, Asn-164, and Asn-190. Cys-151 and Cys-165 form a disulfide bridge. A run of 3 helical transmembrane segments spans residues 246–270 (PLFY…VFYL), 278–296 (TSVA…LLIS), and 312–333 (FLLF…VLNI). The Cytoplasmic portion of the chain corresponds to 334–471 (HFRTPSTHVL…WNQVARTVDR (138 aa)). Tyr-390 carries the phosphotyrosine; by Tyr-kinases modification. A helical membrane pass occupies residues 472-490 (LCLFVVTPVMVVGTAWIFL).

It belongs to the ligand-gated ion channel (TC 1.A.9) family. Acetylcholine receptor (TC 1.A.9.1) subfamily. Delta/CHRND sub-subfamily. As to quaternary structure, pentamer of two alpha chains, and one each of the beta, delta, and gamma (in immature muscle) or epsilon (in mature muscle) chains. The muscle heteropentamer composed of alpha-1, beta-1, delta, epsilon subunits interacts with the alpha-conotoxin ImII.

It localises to the postsynaptic cell membrane. The protein resides in the cell membrane. It carries out the reaction K(+)(in) = K(+)(out). The enzyme catalyses Na(+)(in) = Na(+)(out). After binding acetylcholine, the AChR responds by an extensive change in conformation that affects all subunits and leads to opening of an ion-conducting channel across the plasma membrane. This chain is Acetylcholine receptor subunit delta (Chrnd), found in Rattus norvegicus (Rat).